A 485-amino-acid polypeptide reads, in one-letter code: MSGQKGEIVVYTKELETTPELLPNHEVFKIRIGQKLFEISGATLNSDAPNFFTQFFNTHDKNTILFVDRSEDVFIIIYRHLQGYFPDIKNEVQFTCLFADALYFQLPKLVKLIKEYDYHFTNIGGVPFKVPKSLFHEEGNRLNYFETISRISYEEIEKWESNKKPGFPPLLPPSYIARSPEFFRDILSLLGGSKLELSEERTASLIKECRYYRLNRLEQELVRAKIIYNPLTNCQEVCIALDSVSKKGVTIERLTSLHTGNQSLAVSSCLNGTEGEKAATGFHKTETDSGNNDEYEPPTKKVKHCIERHWSMLKYQRPYIDTVSHDLIFQLHSNQCKIIFNKKNKTVHVDLSREAAVLFENKFSDVLLENPDFKIDLSEYKVKLRDSQMQVESHLIIPACVSICDLTVNGAKCCNIFSLVNDSKCKGRVLDCTNLKVLNCVHGLKLHLSKSMWKLGTNNGRIILVAVKAETFSGTKEYCKMIDFL.

The region spanning 26-121 (EVFKIRIGQK…LIKEYDYHFT (96 aa)) is the BTB domain.

The protein localises to the nucleus. This Saccharomyces cerevisiae (strain ATCC 204508 / S288c) (Baker's yeast) protein is BTB/POZ domain-containing protein YLR108C.